Consider the following 513-residue polypeptide: Na(+)/H(+) antiporter NhaB (513 aa).

The next 11 membrane-spanning stretches (helical) occupy residues 21 to 41 (LCIITFLVINPLIYFFVSPFI), 43 to 63 (GWTLVAEFIFTLSMALKCYPL), 88 to 108 (IIANFEVILLLMFMVAGIYFM), 137 to 157 (AAFLSAFLDALTVIAVIISVG), 202 to 222 (LLMHAAVGSALGGVMTMVGEP), 235 to 255 (FIEFLIRVAPVSLPVLICGIA), 299 to 318 (MAIQALAGIWLIVGLALHLA), 322 to 344 (IIGLTIIIICTAFCGITDEHAIG), 350 to 370 (PMPFTALIVVFFTIVAVIVDL), 389 to 409 (LALFYVFNGLLSMISDNVFVG), and 477 to 497 (MALPYTIVLSIVGFFALEYLL).

The protein belongs to the NhaB Na(+)/H(+) (TC 2.A.34) antiporter family.

It is found in the cell inner membrane. The enzyme catalyses 2 Na(+)(in) + 3 H(+)(out) = 2 Na(+)(out) + 3 H(+)(in). Na(+)/H(+) antiporter that extrudes sodium in exchange for external protons. The protein is Na(+)/H(+) antiporter NhaB of Haemophilus ducreyi (strain 35000HP / ATCC 700724).